The following is a 488-amino-acid chain: E3 ubiquitin-protein ligase RNF8 (488 aa).

The FHA domain occupies 38–92 (VTIGRGLSVTYQLISKVCPLMISRSHCVLKQNPEGQWTIMDNKSLNGVWLNRERL). Positions 68 to 72 (QNPEG) are required for interaction with PIWIL1. The interval 141-164 (DQRMEKHKGSRTKRKFSSPGLENL) is disordered. The span at 145–156 (EKHKGSRTKRKF) shows a compositional bias: basic residues. Serine 157 is subject to Phosphoserine. An RING-type zinc finger spans residues 406–444 (CIICSEYFIEAVTLNCAHSFCSFCINEWMKRKVECPICR).

It belongs to the RNF8 family. Homodimer. Forms a E2-E3 ubiquitin ligase complex composed of the RNF8 homodimer and a E2 heterodimer of UBE2N and UBE2V2. Interacts with class III E2s, including UBE2E1, UBE2E2, and UBE2E3 and with UBE2N. Interacts with RXRA. Interacts (via FHA domain) with ATM-phosphorylated MDC1. Interacts (via FHA domain) with 'Thr-4829' phosphorylated HERC2 (via C-terminus). Interacts with PIWIL1; leading to sequester RNF8 in the cytoplasm. Interacts with WRAP53/TCAB1. As to quaternary structure, (Microbial infection) May interact with the L.monocytogenes protein actA; however, given these errors in the sequence (AJ242721), the relevance of the interaction with actA remains to be confirmed. Autoubiquitinated through 'Lys-48' and 'Lys-63' of ubiquitin. 'Lys-63' polyubiquitination is mediated by UBE2N. 'Lys-29'-type polyubiquitination is also observed, but it doesn't require its own functional RING-type zinc finger.

The protein resides in the nucleus. The protein localises to the cytoplasm. It is found in the midbody. Its subcellular location is the chromosome. It localises to the telomere. It catalyses the reaction S-ubiquitinyl-[E2 ubiquitin-conjugating enzyme]-L-cysteine + [acceptor protein]-L-lysine = [E2 ubiquitin-conjugating enzyme]-L-cysteine + N(6)-ubiquitinyl-[acceptor protein]-L-lysine.. It participates in protein modification; protein ubiquitination. Its function is as follows. E3 ubiquitin-protein ligase that plays a key role in DNA damage signaling via 2 distinct roles: by mediating the 'Lys-63'-linked ubiquitination of histones H2A and H2AX and promoting the recruitment of DNA repair proteins at double-strand breaks (DSBs) sites, and by catalyzing 'Lys-48'-linked ubiquitination to remove target proteins from DNA damage sites. Following DNA DSBs, it is recruited to the sites of damage by ATM-phosphorylated MDC1 and catalyzes the 'Lys-63'-linked ubiquitination of histones H2A and H2AX, thereby promoting the formation of TP53BP1 and BRCA1 ionizing radiation-induced foci (IRIF). Also controls the recruitment of UIMC1-BRCC3 (RAP80-BRCC36) and PAXIP1/PTIP to DNA damage sites. Promotes the recruitment of NBN to DNA damage sites by catalyzing 'Lys-6'-linked ubiquitination of NBN. Also recruited at DNA interstrand cross-links (ICLs) sites and catalyzes 'Lys-63'-linked ubiquitination of histones H2A and H2AX, leading to recruitment of FAAP20 and Fanconi anemia (FA) complex, followed by interstrand cross-link repair. H2A ubiquitination also mediates the ATM-dependent transcriptional silencing at regions flanking DSBs in cis, a mechanism to avoid collision between transcription and repair intermediates. Promotes the formation of 'Lys-63'-linked polyubiquitin chains via interactions with the specific ubiquitin-conjugating UBE2N/UBC13 and ubiquitinates non-histone substrates such as PCNA. Substrates that are polyubiquitinated at 'Lys-63' are usually not targeted for degradation. Also catalyzes the formation of 'Lys-48'-linked polyubiquitin chains via interaction with the ubiquitin-conjugating UBE2L6/UBCH8, leading to degradation of substrate proteins such as CHEK2, JMJD2A/KDM4A and KU80/XRCC5: it is still unclear how the preference toward 'Lys-48'- versus 'Lys-63'-linked ubiquitination is regulated but it could be due to RNF8 ability to interact with specific E2 specific ligases. For instance, interaction with phosphorylated HERC2 promotes the association between RNF8 and UBE2N/UBC13 and favors the specific formation of 'Lys-63'-linked ubiquitin chains. Promotes non-homologous end joining (NHEJ) by promoting the 'Lys-48'-linked ubiquitination and degradation the of KU80/XRCC5. Following DNA damage, mediates the ubiquitination and degradation of JMJD2A/KDM4A in collaboration with RNF168, leading to unmask H4K20me2 mark and promote the recruitment of TP53BP1 at DNA damage sites. Following DNA damage, mediates the ubiquitination and degradation of POLD4/p12, a subunit of DNA polymerase delta. In the absence of POLD4, DNA polymerase delta complex exhibits higher proofreading activity. In addition to its function in damage signaling, also plays a role in higher-order chromatin structure by mediating extensive chromatin decondensation. Involved in the activation of ATM by promoting histone H2B ubiquitination, which indirectly triggers histone H4 'Lys-16' acetylation (H4K16ac), establishing a chromatin environment that promotes efficient activation of ATM kinase. Required in the testis, where it plays a role in the replacement of histones during spermatogenesis. At uncapped telomeres, promotes the joining of deprotected chromosome ends by inducing H2A ubiquitination and TP53BP1 recruitment, suggesting that it may enhance cancer development by aggravating telomere-induced genome instability in case of telomeric crisis. Promotes the assembly of RAD51 at DNA DSBs in the absence of BRCA1 and TP53BP1 Also involved in class switch recombination in immune system, via its role in regulation of DSBs repair. May be required for proper exit from mitosis after spindle checkpoint activation and may regulate cytokinesis. May play a role in the regulation of RXRA-mediated transcriptional activity. Not involved in RXRA ubiquitination by UBE2E2. The chain is E3 ubiquitin-protein ligase RNF8 from Mus musculus (Mouse).